The chain runs to 55 residues: DNA-directed RNA polymerase subunit Rpo10 (55 aa).

Residues Cys6, Cys9, Cys43, and Cys44 each contribute to the Zn(2+) site.

This sequence belongs to the archaeal Rpo10/eukaryotic RPB10 RNA polymerase subunit family. Part of the RNA polymerase complex. It depends on Zn(2+) as a cofactor.

It localises to the cytoplasm. It carries out the reaction RNA(n) + a ribonucleoside 5'-triphosphate = RNA(n+1) + diphosphate. DNA-dependent RNA polymerase (RNAP) catalyzes the transcription of DNA into RNA using the four ribonucleoside triphosphates as substrates. The polypeptide is DNA-directed RNA polymerase subunit Rpo10 (Methanothermobacter thermautotrophicus (strain ATCC 29096 / DSM 1053 / JCM 10044 / NBRC 100330 / Delta H) (Methanobacterium thermoautotrophicum)).